Here is a 511-residue protein sequence, read N- to C-terminus: ATP synthase subunit alpha, plastid (511 aa).

ATP is bound at residue 170 to 177 (GDRQTGKT).

This sequence belongs to the ATPase alpha/beta chains family. F-type ATPases have 2 components, CF(1) - the catalytic core - and CF(0) - the membrane proton channel. CF(1) has five subunits: alpha(3), beta(3), gamma(1), delta(1), epsilon(1). CF(0) has four main subunits: a, b, b' and c.

Its subcellular location is the plastid membrane. The catalysed reaction is ATP + H2O + 4 H(+)(in) = ADP + phosphate + 5 H(+)(out). Produces ATP from ADP in the presence of a proton gradient across the membrane. The alpha chain is a regulatory subunit. The protein is ATP synthase subunit alpha, plastid of Cuscuta reflexa (Southern Asian dodder).